A 653-amino-acid polypeptide reads, in one-letter code: Putative clathrin assembly protein At2g25430 (653 aa).

Residues 23-159 (VASNMAPDLE…ELALFERKSG (137 aa)) form the ENTH domain. Residues 160–171 (VSVNSGGNSSHH) are compositionally biased toward low complexity. Residues 160–240 (VSVNSGGNSS…GGGGGGRDEK (81 aa)) are disordered. Residues 172 to 186 (SNNDDRYGRGRDDFR) show a composition bias toward basic and acidic residues. Gly residues predominate over residues 197 to 214 (NGGGGGSDFRGDNNGYGG). Serine 221 bears the Phosphoserine mark. Threonine 244 is subject to Phosphothreonine. Positions 376-389 (RAKRGKSPERKEIE) are enriched in basic and acidic residues. The disordered stretch occupies residues 376–431 (RAKRGKSPERKEIEAPPPVVEEEEPEPDMNEIKALPPPENYTPPPPPEPEPQPEKP). A compositionally biased stretch (acidic residues) spans 395-404 (VEEEEPEPDM). Residues 410-425 (LPPPENYTPPPPPEPE) show a composition bias toward pro residues.

It localises to the membrane. Its subcellular location is the clathrin-coated pit. The protein localises to the golgi apparatus. The protein resides in the cytoplasmic vesicle. It is found in the clathrin-coated vesicle. The polypeptide is Putative clathrin assembly protein At2g25430 (Arabidopsis thaliana (Mouse-ear cress)).